We begin with the raw amino-acid sequence, 48 residues long: Small, acid-soluble spore protein O (48 aa).

Residues 1 to 23 form a disordered region; it reads MVKRKANHVINGMNDAKSQGKGA.

This sequence belongs to the SspO family.

It is found in the spore core. The protein is Small, acid-soluble spore protein O of Bacillus velezensis (strain DSM 23117 / BGSC 10A6 / LMG 26770 / FZB42) (Bacillus amyloliquefaciens subsp. plantarum).